A 202-amino-acid polypeptide reads, in one-letter code: Small ribosomal subunit protein uS4 (202 aa).

The segment covering 1–13 has biased composition (basic residues); the sequence is MSRYRGPRLRVTR. A disordered region spans residues 1-42; that stretch reads MSRYRGPRLRVTRRLGELPGLTRKASKKSNPPGQHGQARRKR. The S4 RNA-binding domain maps to 90 to 152; it reads NRLDNVCFRL…KASKKLVEGN (63 aa).

It belongs to the universal ribosomal protein uS4 family. Part of the 30S ribosomal subunit. Contacts protein S5. The interaction surface between S4 and S5 is involved in control of translational fidelity.

One of the primary rRNA binding proteins, it binds directly to 16S rRNA where it nucleates assembly of the body of the 30S subunit. Functionally, with S5 and S12 plays an important role in translational accuracy. The polypeptide is Small ribosomal subunit protein uS4 (Prochlorococcus marinus (strain MIT 9312)).